Consider the following 309-residue polypeptide: Protein RTM1 (309 aa).

The next 7 helical transmembrane spans lie at 22–42 (AIAL…QVVW), 83–103 (TFSA…GYIA), 119–139 (IQAV…YMLF), 162–182 (FFVF…GLMA), 193–213 (LITA…INEF), 233–253 (WWFL…RSIV), and 278–298 (AVPM…GNIF).

Belongs to the lipid-translocating exporter (LTE) (TC 9.A.26.1) family.

The protein localises to the membrane. Functionally, confers resistance to molasses (to a particular toxic element present in some molasses). The protein is Protein RTM1 (RTM1) of Saccharomyces cerevisiae (Baker's yeast).